The chain runs to 1025 residues: MEQQIHQAVEIALSGTADPTLKNQAFEFINHIKSTEEGYKACVDILIKSSNESINDGLKFFVYQVIDENIDKLSQEQVFTLNQELFKCLSSYINNNLQDPTHLRNKFAQILAKQFCQVYINIYPNFIKDLLELINVSEATSTNPNNLLAIDYYTRVLIGIHSEIGDKYITRSQEIHNRNNLLKDAIRTQDMQQMVTSWIQILTNPSFAHSEEILNNTLKIVGQYVSWMEISLFISPEFINTVFSFLQNSKLRNTTCETLIDIISKKMAPQNKLELLSLLNLTEFIGTLNLIEKNKNDDDDEDEDVEFMEFVAKLLNQIGQELLIVLENQSGLLEQVNAQLFKLWPAILGCLNHNYDDVSQNVFPFLQQFLTLSKKNPQLYTVDLMSTLLNKLILKMRFDDDDDGVSDEDTQAQFLDFRAKLKSFQDTIALLEPQLYLEAIPVIINESIFETNVDDVNWRKVELGLYQLNGFSDSIRNNVFQISRNEINQSKPYLIFQEFLIKLINSDLIMKINHPMIQSNFFELIVKHYNFLVSRESNFELIIKILQIFTSPLGLFNENEKVRIRSWYLFFRFIKLTKPKLDNEALIESIVVKMQPLLVIKAELPTKDEDDDIVENGNFNNQQYLFETMGLLISLIPNELSQLKSKLIDLIFQPIFNDLEKCISIPESQREPIVILQAHHSLQAIGTLVRGYDYESGLKFLPDVVAKIDNAAQVVLITLENFSSHEMIRDATRFAFARFIPIFKSDNDNNNKNNLIISQHLSKLITIIWSSSNLKISEYSDFLSFLGQIVHNFRTDDNIYQLLNNFITPLFQKIFQVLQNPVTEDENLRPDIIRDKNSLKRATLNFISSIVMNHLSSLLITESNKQELPEIIGKVFEYSYDLSDTTTSKLAIVQLTNFVNVFGGSGGKLDDKEDKYSENLPPIEGIDEFLINKVINLSFELPFQKQEFNLNDAQYRLIAQEIAILLKSFELKKHDEFIVVLSNYLLNMGLSQDLCNDFCLNLHNLDLKDFKKYFISFINKMKSGK.

It belongs to the exportin family.

The protein localises to the nucleus. Its subcellular location is the cytoplasm. Its function is as follows. tRNA nucleus export receptor which facilitates tRNA translocation across the nuclear pore complex. Involved in pre-tRNA splicing, probably by affecting the interaction of pre-tRNA with splicing endonuclease. In Candida albicans (strain SC5314 / ATCC MYA-2876) (Yeast), this protein is Exportin-T (LOS1).